The sequence spans 430 residues: PCI domain-containing protein 2 homolog (430 aa).

In terms of domain architecture, PCI spans 243-424; sequence ITYRFFNGRL…ALVVSPTNPF (182 aa).

The protein belongs to the CSN12 family.

In Dictyostelium discoideum (Social amoeba), this protein is PCI domain-containing protein 2 homolog (pcid2).